We begin with the raw amino-acid sequence, 194 residues long: NADH-quinone oxidoreductase subunit B (194 aa).

C73, C74, C138, and C168 together coordinate [4Fe-4S] cluster.

It belongs to the complex I 20 kDa subunit family. As to quaternary structure, NDH-1 is composed of 14 different subunits. Subunits NuoB, C, D, E, F, and G constitute the peripheral sector of the complex. [4Fe-4S] cluster is required as a cofactor.

It is found in the cell inner membrane. It carries out the reaction a quinone + NADH + 5 H(+)(in) = a quinol + NAD(+) + 4 H(+)(out). Functionally, NDH-1 shuttles electrons from NADH, via FMN and iron-sulfur (Fe-S) centers, to quinones in the respiratory chain. The immediate electron acceptor for the enzyme in this species is believed to be ubiquinone. Couples the redox reaction to proton translocation (for every two electrons transferred, four hydrogen ions are translocated across the cytoplasmic membrane), and thus conserves the redox energy in a proton gradient. The sequence is that of NADH-quinone oxidoreductase subunit B from Rhizobium johnstonii (strain DSM 114642 / LMG 32736 / 3841) (Rhizobium leguminosarum bv. viciae).